A 136-amino-acid chain; its full sequence is MTTPIEKTDAEWKALLAEKGAEPAAFEVTRHAATERPFTGKYEAHWDDGTYHCICCGAKLFESSTKFDAGCGWPSFSQEAVPGAIRNIVDRSHGMVRTENVCANCGAHLGHVFPDGPTETGLRYCMNSASLDFKKK.

The MsrB domain occupies 9–136 (DAEWKALLAE…NSASLDFKKK (128 aa)). Zn(2+)-binding residues include Cys-53, Cys-56, Cys-102, and Cys-105. Cys-125 functions as the Nucleophile in the catalytic mechanism.

This sequence belongs to the MsrB Met sulfoxide reductase family. It depends on Zn(2+) as a cofactor.

The enzyme catalyses L-methionyl-[protein] + [thioredoxin]-disulfide + H2O = L-methionyl-(R)-S-oxide-[protein] + [thioredoxin]-dithiol. The polypeptide is Peptide methionine sulfoxide reductase MsrB (Variovorax paradoxus (strain S110)).